The chain runs to 247 residues: MFLAKAILEGADRGLGGALGGLLGGGGQARAGGGNIGGILGGIVNFISEAAAAQYTPEPPPQQQHFTVVEASESEEVRRFRQQFTQLAGPDMEVGATDLMNILNKVLSKHKELKTEGFSLDTCRSIVSVMDSDTTGKLGFEEFKYLWNNIKKWQCVFKQYDSDHSGSLGSSQLHGAMQAAGFQLNEQLYLMIVRRYADEDGGMDFNNFISCLVRLDAMFRAFKALDRDRDGLIQVSIREWLQLTMYS.

Alanine 88, aspartate 91, glutamate 93, aspartate 131, aspartate 133, threonine 135, lysine 137, glutamate 142, aspartate 161, aspartate 163, serine 165, and aspartate 204 together coordinate Ca(2+). EF-hand domains are found at residues phenylalanine 118–lysine 151, asparagine 148–glutamine 183, leucine 184–leucine 212, and valine 213–serine 247.

As to quaternary structure, heterodimer of a large (catalytic) and a small (regulatory) subunit.

It is found in the cytoplasm. The protein resides in the cell membrane. In terms of biological role, calcium-regulated non-lysosomal thiol-protease which catalyzes limited proteolysis of substrates involved in cytoskeletal remodeling and signal transduction. This small subunit may act as a tissue-specific chaperone of the large subunit, possibly by helping it fold into its correct conformation for activity. This chain is Calpain small subunit 2 (Capns2), found in Mus musculus (Mouse).